Reading from the N-terminus, the 128-residue chain is 3-aminoacrylate deaminase RutC (128 aa).

This sequence belongs to the RutC family. As to quaternary structure, homotrimer.

It carries out the reaction (Z)-3-aminoacrylate + H2O + H(+) = 3-oxopropanoate + NH4(+). Involved in pyrimidine catabolism. Catalyzes the deamination of 3-aminoacrylate to malonic semialdehyde, a reaction that can also occur spontaneously. RutC may facilitate the reaction and modulate the metabolic fitness, rather than catalyzing essential functions. The sequence is that of 3-aminoacrylate deaminase RutC from Escherichia coli (strain SE11).